Consider the following 185-residue polypeptide: UPF0669 protein C6orf120 homolog (185 aa).

The first 23 residues, 1–23 (MATPWRRALLMILASQVVTLVKC), serve as a signal peptide directing secretion. N47 is a glycosylation site (N-linked (GlcNAc...) asparagine).

The protein belongs to the UPF0669 family.

The protein localises to the secreted. Functionally, may be involved in induction of apoptosis in CD4(+) T-cells, but not CD8(+) T-cells or hepatocytes. In Mus musculus (Mouse), this protein is UPF0669 protein C6orf120 homolog.